Consider the following 400-residue polypeptide: WW domain-containing transcription regulator protein 1 (400 aa).

Residue K46 forms a Glycyl lysine isopeptide (Lys-Gly) (interchain with G-Cter in ubiquitin) linkage. Positions 52–117 are disordered; sequence FFKEPDSGSH…QQHAHLRQQS (66 aa). Residues 61–70 show a composition bias toward polar residues; it reads HSRQSSTDSS. Phosphoserine occurs at positions 62 and 89. Low complexity predominate over residues 91–110; sequence PASLQLGPGAGAAGSPAQQH. The WW domain occupies 124 to 157; sequence LPLPPGWEMTFTATGQRYFLNHIEKITTWQDPRK. A compositionally biased stretch (polar residues) spans 192 to 211; the sequence is NHQHQQQMAPTNLSQQNHPT. The disordered stretch occupies residues 192–216; sequence NHQHQQQMAPTNLSQQNHPTQNPPA. Residues 222-400 form a required for interaction with PALS1 region; that stretch reads PNALTTQQQQ…NKSEPFLTWL (179 aa). S295 and S311 each carry phosphoserine. A PDZ-binding motif is present at residues 394-400; sequence EPFLTWL.

In terms of assembly, binds to SLC9A3R2 via the PDZ motif at the plasma membrane. Binds to YWHAZ in vivo and in vitro through the phosphoserine-binding motif RSHSSP. Interacts (via coiled-coil domain) with SMAD2 (via MH1 domain), SMAD3 and SMAD4. Interacts with MED15. Interacts with PAX8 and NKX2-1. Interacts with TEAD1, TEAD2, TEAD3 and TEAD4. Interacts (via WW domain) with PALS1. Interacts with LATS1. Interacts with YAP1 (when phosphorylated at 'Ser-112'). Interacts (via WW domain) with PRRG4 (via cytoplasmic domain). Interacts (via WW domain) with AMOTL2 (via PPXY motif); the interaction promotes WWTR1/TAZ localization to the cytoplasm and tight junctions, thereby inhibiting its transcriptional coactivator properties. Interacts (via WW domain) with AMOT; the interaction facilitates translocation of WWTR1/TAZ to the cytoplasm. In terms of processing, phosphorylated by LATS2 and STK3/MST2. Phosphorylation by LATS2 results in creation of 14-3-3 binding sites, retention in the cytoplasm, and functional inactivation. Phosphorylation results in the inhibition of transcriptional coactivation through YWHAZ-mediated nuclear export. Post-translationally, ubiquitinated at Lys-46; leading to proteasomal degradation. Deubiquitinated and stabilized by UCHL1 at Lys-46; leading to inhibition of osteoclastogenesis.

It is found in the cytoplasm. The protein localises to the nucleus. It localises to the cell membrane. The protein resides in the cell junction. Its subcellular location is the tight junction. In terms of biological role, transcriptional coactivator which acts as a downstream regulatory target in the Hippo signaling pathway that plays a pivotal role in organ size control and tumor suppression by restricting proliferation and promoting apoptosis. The core of this pathway is composed of a kinase cascade wherein STK3/MST2 and STK4/MST1, in complex with its regulatory protein SAV1, phosphorylates and activates LATS1/2 in complex with its regulatory protein MOB1, which in turn phosphorylates and inactivates YAP1 oncoprotein and WWTR1/TAZ. WWTR1 enhances PAX8 and NKX2-1/TTF1-dependent gene activation. In conjunction with YAP1, involved in the regulation of TGFB1-dependent SMAD2 and SMAD3 nuclear accumulation. Plays a key role in coupling SMADs to the transcriptional machinery such as the mediator complex. Regulates embryonic stem-cell self-renewal, promotes cell proliferation and epithelial-mesenchymal transition. In Canis lupus familiaris (Dog), this protein is WW domain-containing transcription regulator protein 1.